We begin with the raw amino-acid sequence, 519 residues long: NADH dehydrogenase (519 aa).

The membrane-binding stretch occupies residues 1 to 183 (MVLEPQIKSQ…YLNGESFTSG (183 aa)). The catalytic stretch occupies residues 184-519 (RMTVEEILAQ…TTPAESAAAK (336 aa)). Position 210 to 241 (210 to 241 (DVLVVGGGPAGASSAIYAARKGIRTGIVADRF)) interacts with FAD. Cysteine 337 and cysteine 340 are disulfide-bonded. 349–379 (DVAVIGGGNSGVEAAIDLAGIVNHVTVLEFM) is an NAD(+) binding site. 469 to 479 (TNVPGVFAAGD) contributes to the FAD binding site.

It belongs to the class-II pyridine nucleotide-disulfide oxidoreductase family. In terms of assembly, homodimer. The cofactor is FAD.

Its subcellular location is the cell membrane. The catalysed reaction is a ubiquinone + NADH + 5 H(+)(in) = a ubiquinol + NAD(+) + 4 H(+)(out). Transfer of electrons from NADH to the respiratory chain. The immediate electron acceptor for the enzyme is believed to be ubiquinone. In Ferdinandcohnia aciditolerans (strain JCM 32973 / CCTCC AB 2017280 / YN-1) (Bacillus aciditolerans), this protein is NADH dehydrogenase (ahpF).